Consider the following 219-residue polypeptide: MACRTLPSRRQEEETTKDLALKLPPGKPGGHLPSIDETRPIGPGPASRRGSLPGLHPSFSRRNSLAGPLVGPGGRRPSLGPVPPLGSRVSFSGLPLMLPRRMAPSYRLEPAPGEHWEAAGAQRALEAALTTQLNGVCYCGSEAGKLVQALCEQIHTRVRELNLPRYKLVCNVVLGPREGQGVHVVSRALWDAVHDGLASATFTNPSLFAVATVHAVYWE.

Residues 1-84 (MACRTLPSRR…RRPSLGPVPP (84 aa)) are disordered. The span at 9 to 20 (RRQEEETTKDLA) shows a compositional bias: basic and acidic residues. S64 carries the post-translational modification Phosphoserine.

The protein belongs to the dynein light chain Tctex-type family. In terms of assembly, interacts with ENG/endoglin, TGFBR2 and TGFBR3. Interacts with PPP1CC.

It localises to the cell projection. It is found in the cilium. The protein resides in the flagellum. Its subcellular location is the cytoplasmic vesicle. The protein localises to the secretory vesicle. It localises to the acrosome. It is found in the cytoplasm. The protein resides in the cytoskeleton. Its subcellular location is the cilium axoneme. The protein localises to the nucleus. It localises to the microtubule organizing center. The protein is Dynein light chain Tctex-type 4 (Dynlt4) of Mus musculus (Mouse).